The chain runs to 233 residues: Adenosine 5'-phosphosulfate reductase (233 aa).

Cysteine 120, cysteine 121, cysteine 203, and cysteine 206 together coordinate [4Fe-4S] cluster. Cysteine 229 (nucleophile; cysteine thiosulfonate intermediate) is an active-site residue.

The protein belongs to the PAPS reductase family. CysH subfamily. [4Fe-4S] cluster is required as a cofactor.

Its subcellular location is the cytoplasm. The catalysed reaction is [thioredoxin]-disulfide + sulfite + AMP + 2 H(+) = adenosine 5'-phosphosulfate + [thioredoxin]-dithiol. It participates in sulfur metabolism; hydrogen sulfide biosynthesis; sulfite from sulfate. Its function is as follows. Catalyzes the formation of sulfite from adenosine 5'-phosphosulfate (APS) using thioredoxin as an electron donor. This Bacillus pumilus (strain SAFR-032) protein is Adenosine 5'-phosphosulfate reductase.